Consider the following 599-residue polypeptide: MNYKRNFSIIAHIDHGKSTLSDRIIQLCGGLTEREMASQVLDSMDLERERGITIKAQSVTLYYQAQDGNTYQLNFIDTPGHVDFSYEVSRSLAACEGALLVVDAAQGVEAQTLANCYTALEMNLEVVPVLNKIDLPASDPDRIAEEIEDIVGIDATDAVRCSAKTGIGIADVLERLVRDIPAPKGDPKGTLQALIIDSWFDNYLGVVSLIRLKNGTLRKGDKVKVMSTGQIYNVERLGIFTPKRFDTDILNCGEVGWLVCAIKDILGAPVGDTLTLSRHPAEKPLPGFKKVKPQVYAGLFPISSDDYESFRDALAKLSLNDASLFFEPENSGALGFGFRCGFLGLLHMEIVQERLEREYHLDLITTAPTVVYEVKTVKKEILYVDSPSKLPALSEIEELREPIAECHILLPQEYLGNVMTLCVAKRGVQVNMVYHGHQVALTYHIPMAEVVLDFFDRLKSTSRGYASLDYNFKRFQASDMVRVDILLNTERVDALALITHRDNAASRGRELVEKMKDFIPRQQFDIAIQAAIGHHIIARATVKQLRKNVLAKCYGGDVSRKKKLLQKQKEGKKRMKRVGNVELPQDAFLAILHIGKESK.

One can recognise a tr-type G domain in the interval Asn2–Lys184. GTP-binding positions include Asp14–Thr19 and Asn131–Asp134.

The protein belongs to the TRAFAC class translation factor GTPase superfamily. Classic translation factor GTPase family. LepA subfamily.

Its subcellular location is the cell membrane. The catalysed reaction is GTP + H2O = GDP + phosphate + H(+). In terms of biological role, required for accurate and efficient protein synthesis under certain stress conditions. May act as a fidelity factor of the translation reaction, by catalyzing a one-codon backward translocation of tRNAs on improperly translocated ribosomes. Back-translocation proceeds from a post-translocation (POST) complex to a pre-translocation (PRE) complex, thus giving elongation factor G a second chance to translocate the tRNAs correctly. Binds to ribosomes in a GTP-dependent manner. This Hamiltonella defensa subsp. Acyrthosiphon pisum (strain 5AT) protein is Elongation factor 4.